The following is a 141-amino-acid chain: Nucleoside diphosphate kinase (141 aa).

Lysine 11, phenylalanine 59, arginine 87, threonine 93, arginine 104, and asparagine 114 together coordinate ATP. Histidine 117 functions as the Pros-phosphohistidine intermediate in the catalytic mechanism.

The protein belongs to the NDK family. As to quaternary structure, homotetramer. Requires Mg(2+) as cofactor.

The protein resides in the cytoplasm. The enzyme catalyses a 2'-deoxyribonucleoside 5'-diphosphate + ATP = a 2'-deoxyribonucleoside 5'-triphosphate + ADP. The catalysed reaction is a ribonucleoside 5'-diphosphate + ATP = a ribonucleoside 5'-triphosphate + ADP. Major role in the synthesis of nucleoside triphosphates other than ATP. The ATP gamma phosphate is transferred to the NDP beta phosphate via a ping-pong mechanism, using a phosphorylated active-site intermediate. This chain is Nucleoside diphosphate kinase, found in Ralstonia nicotianae (strain ATCC BAA-1114 / GMI1000) (Ralstonia solanacearum).